Here is a 172-residue protein sequence, read N- to C-terminus: Lipoprotein signal peptidase (172 aa).

3 consecutive transmembrane segments (helical) span residues 10 to 30 (LIWL…KAWV), 68 to 88 (WQLW…AFWL), and 98 to 118 (SALP…DRLM). Active-site residues include Asp-124 and Asp-142. Residues 138–158 (FNIADSAIVGGAIGIAVFGLF) traverse the membrane as a helical segment.

Belongs to the peptidase A8 family.

It is found in the cell inner membrane. The catalysed reaction is Release of signal peptides from bacterial membrane prolipoproteins. Hydrolyzes -Xaa-Yaa-Zaa-|-(S,diacylglyceryl)Cys-, in which Xaa is hydrophobic (preferably Leu), and Yaa (Ala or Ser) and Zaa (Gly or Ala) have small, neutral side chains.. It participates in protein modification; lipoprotein biosynthesis (signal peptide cleavage). Functionally, this protein specifically catalyzes the removal of signal peptides from prolipoproteins. In Xanthomonas euvesicatoria pv. vesicatoria (strain 85-10) (Xanthomonas campestris pv. vesicatoria), this protein is Lipoprotein signal peptidase.